The chain runs to 129 residues: Virion-associated protein (129 aa).

Coiled coils occupy residues Met1–Leu31 and Ile38–Asp59. Positions Pro122–Tyr129 are capsid binding.

Belongs to the caulimovirus ORF III family. As to quaternary structure, homotetramer, through coiled-coil domain. Homotrimer when interacts with icosehadral capsid. Interacts with capsid protein, and with Movement protein.

It is found in the virion. The protein resides in the host cell junction. It localises to the host plasmodesma. Its function is as follows. Plays a role in virus cell-to-cell and plant-to-plant transmission. Interacts with virion icosahedral capsid and movement protein, thereby facilitating virion cell-to-cell transmission through plasmodesmata opened by viral movement protein. Also interacts with aphid transmission factor, attaching the virion to aphid stylet when the animal feeds on an virus infected plant. Aphid saliva may later detach the virion, inducing release of infectious particles when the animal feeds on a new plant. The chain is Virion-associated protein from Cauliflower mosaic virus (strain D/H) (CaMV).